Reading from the N-terminus, the 527-residue chain is Pyruvate kinase 1, cytosolic (527 aa).

Residue Arg-58 participates in substrate binding. K(+) is bound by residues Asp-60, Ser-62, Asp-92, and Thr-93. Residue 60–63 participates in ATP binding; sequence DFSW. Lys-256 contributes to the substrate binding site. Residue Glu-258 participates in Mg(2+) binding. Substrate is bound by residues Gly-281, Asn-282, and Thr-313. Asn-282 is a binding site for Mg(2+).

It belongs to the pyruvate kinase family. In terms of assembly, homotetramer. Mg(2+) is required as a cofactor. Requires K(+) as cofactor.

It localises to the cytoplasm. The protein localises to the cytosol. It carries out the reaction pyruvate + ATP = phosphoenolpyruvate + ADP + H(+). Its pathway is carbohydrate degradation; glycolysis; pyruvate from D-glyceraldehyde 3-phosphate: step 5/5. Key regulatory enzyme of the glycolytic pathway that catalyzes the final step of glycolysis, converting ADP and phosphoenolpyruvate (PEP) to ATP and pyruvate by essentially irreversible transphosphorylation. Is critical for plant growth and development. The polypeptide is Pyruvate kinase 1, cytosolic (Oryza sativa subsp. indica (Rice)).